The primary structure comprises 254 residues: tRNA (guanine-N(1)-)-methyltransferase (254 aa).

Residues G117 and 136–141 (LGDFVL) each bind S-adenosyl-L-methionine.

This sequence belongs to the RNA methyltransferase TrmD family. As to quaternary structure, homodimer.

The protein resides in the cytoplasm. The enzyme catalyses guanosine(37) in tRNA + S-adenosyl-L-methionine = N(1)-methylguanosine(37) in tRNA + S-adenosyl-L-homocysteine + H(+). In terms of biological role, specifically methylates guanosine-37 in various tRNAs. The chain is tRNA (guanine-N(1)-)-methyltransferase from Levilactobacillus brevis (strain ATCC 367 / BCRC 12310 / CIP 105137 / JCM 1170 / LMG 11437 / NCIMB 947 / NCTC 947) (Lactobacillus brevis).